The chain runs to 963 residues: Ubiquitin carboxyl-terminal hydrolase 4 (963 aa).

The region spanning 11-122 (PDAETQKSEL…GQQPIVRKVV (112 aa)) is the DUSP domain. The tract at residues 27 to 216 (TLQRGAQWYL…LYLGQVLVIE (190 aa)) is necessary for interaction with SART3. Positions 133–141 (VEVYLLELK) match the Nuclear export signal motif. The Ubiquitin-like 1 domain occupies 142–226 (LCENSDPTNV…PQNEDGTWPR (85 aa)). Residues 220–255 (EDGTWPRQTLQSKSSTAPSRNFTTSPKSSASPYSSV) form a disordered region. Residues 225–243 (PRQTLQSKSSTAPSRNFTT) are compositionally biased toward polar residues. The segment at 229–295 (LQSKSSTAPS…SYNCQEPPSS (67 aa)) is required for USP4 activation by providing conformational flexibility between the DUSP and catalytic domains. A compositionally biased stretch (low complexity) spans 244 to 255 (SPKSSASPYSSV). In terms of domain architecture, USP spans 302–923 (CGLGNLGNTC…AAYVLFYQRR (622 aa)). Catalysis depends on Cys-311, which acts as the Nucleophile. The regulates ubiquitin dissociation stretch occupies residues 384-386 (PQF). The tract at residues 405–407 (LHE) is necessary for interaction with RBL2. Residue Ser-445 is modified to Phosphoserine. Residues 459 to 463 (LVCPE) form a necessary for interaction with RB1 and RBL2 region. 2 residues coordinate Zn(2+): Cys-461 and Cys-464. The 89-residue stretch at 483–571 (LKKDRVMEVF…IFVYEVCSTS (89 aa)) folds into the Ubiquitin-like 2 domain. The interval 485 to 775 (KDRVMEVFLV…LQPQKKKKTT (291 aa)) is interacts with DUSP and ubiquitin-like 1 domains and is required for USP4 activation. The segment at 637-698 (DEFGSSPLEP…PSETTQKKIK (62 aa)) is disordered. Ser-655 carries the phosphoserine modification. Residues 657 to 666 (EGEDEEEMEH) are compositionally biased toward acidic residues. Residues Ser-675 and Ser-680 each carry the phosphoserine modification. Positions 767–772 (QPQKKK) match the Nuclear localization signal motif. Residues Cys-799 and Cys-802 each coordinate Zn(2+). Catalysis depends on His-881, which acts as the Proton acceptor. Residues 928 to 963 (YKTPSLSSSGSSDGGTRPSSSQQGLGDDEACSMDTN) form a disordered region. Low complexity predominate over residues 932–948 (SLSSSGSSDGGTRPSSS). Residues 953–963 (GDDEACSMDTN) are compositionally biased toward acidic residues.

Belongs to the peptidase C19 family. USP4 subfamily. Interacts with RB1 (both dephosphorylated and hypophosphorylated forms). Interacts with RBL1 and RBL2. Interacts with ADORA2A (via cytoplasmic C-terminus); the interaction is direct. Interacts with SART3; recruits USP4 to its substrate PRPF3. Phosphorylated at Ser-445 by PKB/AKT1 in response to EGF stimulus, promoting its ability deubiquitinate RHEB. In terms of processing, monoubiquitinated by TRIM21. Ubiquitination does not lead to its proteasomal degradation. Autodeubiquitinated.

The protein localises to the cytoplasm. The protein resides in the nucleus. It catalyses the reaction Thiol-dependent hydrolysis of ester, thioester, amide, peptide and isopeptide bonds formed by the C-terminal Gly of ubiquitin (a 76-residue protein attached to proteins as an intracellular targeting signal).. With respect to regulation, the completion of the deubiquitinase reaction is mediated by the DUSP and ubiquitin-like 1 domains which promotes the release of ubiquitin from the catalytic site enabling subsequent reactions to occur. Functionally, deubiquitinating enzyme that removes conjugated ubiquitin from target proteins. Deubiquitinates PDPK1. Deubiquitinates TRIM21. Deubiquitinates receptor ADORA2A which increases the amount of functional receptor at the cell surface. Deubiquitinates HAS2. Deubiquitinates RHEB in response to EGF signaling, promoting mTORC1 signaling. May regulate mRNA splicing through deubiquitination of the U4 spliceosomal protein PRPF3. This may prevent its recognition by the U5 component PRPF8 thereby destabilizing interactions within the U4/U6.U5 snRNP. May also play a role in the regulation of quality control in the ER. The sequence is that of Ubiquitin carboxyl-terminal hydrolase 4 (USP4) from Pongo abelii (Sumatran orangutan).